We begin with the raw amino-acid sequence, 756 residues long: Phosphoinositide 3-kinase regulatory subunit 6 (756 aa).

2 disordered regions span residues 570-589 (SKSP…EGTG) and 716-738 (CSRT…EKNM). Residues 717 to 731 (SRTQKSKTSALNSHG) are compositionally biased toward polar residues.

As to quaternary structure, heterodimer of a catalytic subunit (PIK3CG) and a regulatory (PIK3R6) subunit. The binding of PIK3R6 to PIK3CG may exclude the binding of PIK3R5 to PIK3CG. Interacts with beta-gamma G protein dimers. Interacts with PDE3B and RAPGEF3; form a signaling complex that regulates phosphatidylinositol 3-kinase gamma in angiogenesis. As to expression, highly expressed in heart. In a lower extent, also expressed in brain, spleen, lung, liver, kidney, prostate, thyroid, salivary gland, dendritic cells, macrophages and neutrophils.

The protein localises to the cytoplasm. Its subcellular location is the cell membrane. Functionally, regulatory subunit of the PI3K gamma complex. Acts as an adapter to drive activation of PIK3CG by beta-gamma G protein dimers. The PIK3CG:PIK3R6 heterodimer is much less sensitive to beta-gamma G proteins than PIK3CG:PIK3R5 and its membrane recruitment and beta-gamma G protein dimer-dependent activation requires HRAS bound to PIK3CG. Recruits of the PI3K gamma complex to a PDE3B:RAPGEF3 signaling complex involved in angiogenesis; signaling seems to involve RRAS. The protein is Phosphoinositide 3-kinase regulatory subunit 6 (Pik3r6) of Mus musculus (Mouse).